The primary structure comprises 84 residues: RQC P-site tRNA stabilizing factor (84 aa).

An S4 RNA-binding domain is found at 1-64 (MRIDKFLQSV…IEEYTILQIP (64 aa)).

The protein belongs to the RqcP family. As to quaternary structure, associates with stalled 50S ribosomal subunits. Binds to RqcH, 23S rRNA and the P-site tRNA. Does not require RqcH for association with 50S subunits.

Functionally, key component of the ribosome quality control system (RQC), a ribosome-associated complex that mediates the extraction of incompletely synthesized nascent chains from stalled ribosomes and their subsequent degradation. RqcH recruits Ala-charged tRNA, and with RqcP directs the elongation of stalled nascent chains on 50S ribosomal subunits, leading to non-templated C-terminal alanine extensions (Ala tail). The Ala tail promotes nascent chain degradation. RqcP is associated with the translocation-like movement of the peptidyl-tRNA from the A-site into the P-site. The sequence is that of RQC P-site tRNA stabilizing factor from Helicobacter pylori (strain J99 / ATCC 700824) (Campylobacter pylori J99).